Here is a 101-residue protein sequence, read N- to C-terminus: Large ribosomal subunit protein uL23 (101 aa).

It belongs to the universal ribosomal protein uL23 family. Part of the 50S ribosomal subunit. Contacts protein L29, and trigger factor when it is bound to the ribosome.

Its function is as follows. One of the early assembly proteins it binds 23S rRNA. One of the proteins that surrounds the polypeptide exit tunnel on the outside of the ribosome. Forms the main docking site for trigger factor binding to the ribosome. In Histophilus somni (strain 129Pt) (Haemophilus somnus), this protein is Large ribosomal subunit protein uL23.